A 197-amino-acid chain; its full sequence is Imidazoleglycerol-phosphate dehydratase (197 aa).

It belongs to the imidazoleglycerol-phosphate dehydratase family.

It is found in the cytoplasm. The catalysed reaction is D-erythro-1-(imidazol-4-yl)glycerol 3-phosphate = 3-(imidazol-4-yl)-2-oxopropyl phosphate + H2O. Its pathway is amino-acid biosynthesis; L-histidine biosynthesis; L-histidine from 5-phospho-alpha-D-ribose 1-diphosphate: step 6/9. In Leptospira biflexa serovar Patoc (strain Patoc 1 / Ames), this protein is Imidazoleglycerol-phosphate dehydratase.